The primary structure comprises 240 residues: Uridylate kinase (240 aa).

12-15 contacts ATP; it reads KLSG. The tract at residues 20-25 is involved in allosteric activation by GTP; that stretch reads GKQGFG. Gly54 is a UMP binding site. The ATP site is built by Gly55 and Arg59. UMP contacts are provided by residues Asp74 and 135–142; that span reads TGNPYFST. ATP is bound by residues Asn163, Tyr169, and Asp172.

It belongs to the UMP kinase family. In terms of assembly, homohexamer.

It localises to the cytoplasm. The catalysed reaction is UMP + ATP = UDP + ADP. It participates in pyrimidine metabolism; CTP biosynthesis via de novo pathway; UDP from UMP (UMPK route): step 1/1. With respect to regulation, allosterically activated by GTP. Inhibited by UTP. Catalyzes the reversible phosphorylation of UMP to UDP. This is Uridylate kinase from Geobacillus thermodenitrificans (strain NG80-2).